We begin with the raw amino-acid sequence, 238 residues long: Protein Iojap, chloroplastic (238 aa).

The N-terminal 66 residues, 1–66 (MASSTGLTVA…KILTSLSNSR (66 aa)), are a transit peptide targeting the chloroplast.

The protein belongs to the Iojap/RsfS family. As to quaternary structure, interacts with chloroplast ribosomal protein uL14c (rpl14).

It is found in the plastid. Its subcellular location is the chloroplast. May be a ribosome silencing factor (Potential). Involved in plastid biogenesis. This chain is Protein Iojap, chloroplastic (IJ), found in Arabidopsis thaliana (Mouse-ear cress).